The sequence spans 438 residues: MGQTLSEPVVEKTSEKGEDDRLIYGVSAMQGWRISMEDAHTAELNLPPPDNDTKTHPDRLSFFGVFDGHGGDKVALFAGENIHNIVFKQESFKSGDYAQGLKDGFLATDRAILNDPKYEEEVSGCTACVTLIAGNKLYVANAGDSRSVLGIKGRAKPLSNDHKPQLETEKNRITAAGGFVDFGRVNGNLALSRAIGDFEFKKSAELSPENQIVTAFPDVEVHELTEEDEFLVIACDGIWDCQSSQAVVEFVRRGIAAKQDLDKICENMMDNCLASNSETGGVGCDNMTMVIIGFLHGKTKEEWYDEIAKRVANGDGPCAPPEYAEFRGPGVHHNYEDSDSGYDVDADSGGKFSLAGSRGRIIFLGDGTEVLTGSDDTEMFDNADEDKDLASQVPKSSGKTDAKEETEAKPAPEAESSKPADGSEKKQDEKTPEESKKD.

The PPM-type phosphatase domain occupies 23–294; that stretch reads IYGVSAMQGW…DNMTMVIIGF (272 aa). Mn(2+) contacts are provided by aspartate 67, glycine 68, aspartate 236, and aspartate 285. The interval 370 to 438 is disordered; it reads VLTGSDDTEM…EKTPEESKKD (69 aa). A compositionally biased stretch (acidic residues) spans 375–387; that stretch reads DDTEMFDNADEDK. The span at 398-438 shows a compositional bias: basic and acidic residues; the sequence is GKTDAKEETEAKPAPEAESSKPADGSEKKQDEKTPEESKKD.

This sequence belongs to the PP2C family. Requires Mg(2+) as cofactor. It depends on Mn(2+) as a cofactor.

It is found in the cytoplasm. It localises to the nucleus. The catalysed reaction is O-phospho-L-seryl-[protein] + H2O = L-seryl-[protein] + phosphate. It catalyses the reaction O-phospho-L-threonyl-[protein] + H2O = L-threonyl-[protein] + phosphate. In terms of biological role, dephosphorylating regulator for many key proteins. Negatively regulates the endoplasmic reticulum unfolded protein response. This is Protein phosphatase 2C homolog 2 from Hypocrea jecorina (strain QM6a) (Trichoderma reesei).